Consider the following 498-residue polypeptide: ATP synthase subunit beta, chloroplastic (498 aa).

Residue 172–179 participates in ATP binding; sequence GGAGVGKT.

It belongs to the ATPase alpha/beta chains family. F-type ATPases have 2 components, CF(1) - the catalytic core - and CF(0) - the membrane proton channel. CF(1) has five subunits: alpha(3), beta(3), gamma(1), delta(1), epsilon(1). CF(0) has four main subunits: a(1), b(1), b'(1) and c(9-12).

The protein resides in the plastid. It localises to the chloroplast thylakoid membrane. The enzyme catalyses ATP + H2O + 4 H(+)(in) = ADP + phosphate + 5 H(+)(out). Its function is as follows. Produces ATP from ADP in the presence of a proton gradient across the membrane. The catalytic sites are hosted primarily by the beta subunits. The protein is ATP synthase subunit beta, chloroplastic of Calamus usitatus (Palm tree).